The chain runs to 745 residues: Centromere protein I (745 aa).

Residues M1–L27 show a composition bias toward polar residues. The interval M1–Q58 is disordered. Residues S39–E50 are compositionally biased toward low complexity.

The protein belongs to the CENP-I/CTF3 family. Component of the CENPA-CAD complex, composed of CENPI, CENPK, CENPL, CENPO, CENPP, CENPQ, CENPR and CENPS. The CENPA-CAD complex interacts with the CENPA-NAC complex, at least composed of CENPA, CENPC, CENPH, CENPM, CENPN, CENPT and CENPU. Interacts with SENP6. Post-translationally, sumoylated. Sumoylated form can be polyubiquitinated by RNF4, leading to its degradation. Desumoylation by SENP6 prevents its degradation. In terms of tissue distribution, highly expressed in testis, ovary and spleen. A much lower mRNA level is found in brain and lung, and no expression is detected in liver, kidney, heart, muscle, pituitary gland, prostate, epididymis and seminal vesicle.

It is found in the nucleus. The protein localises to the chromosome. Its subcellular location is the centromere. In terms of biological role, component of the CENPA-CAD (nucleosome distal) complex, a complex recruited to centromeres which is involved in assembly of kinetochore proteins, mitotic progression and chromosome segregation. May be involved in incorporation of newly synthesized CENPA into centromeres via its interaction with the CENPA-NAC complex. Required for the localization of CENPF, MAD1L1 and MAD2 (MAD2L1 or MAD2L2) to kinetochores. Involved in the response of gonadal tissues to follicle-stimulating hormone. The chain is Centromere protein I (Cenpi) from Rattus norvegicus (Rat).